We begin with the raw amino-acid sequence, 187 residues long: Threonylcarbamoyl-AMP synthase (187 aa).

Residues 4-187 form the YrdC-like domain; it reads TLDLDRAVAA…DARSGQILRD (184 aa).

The protein belongs to the SUA5 family. TsaC subfamily.

It is found in the cytoplasm. The enzyme catalyses L-threonine + hydrogencarbonate + ATP = L-threonylcarbamoyladenylate + diphosphate + H2O. Required for the formation of a threonylcarbamoyl group on adenosine at position 37 (t(6)A37) in tRNAs that read codons beginning with adenine. Catalyzes the conversion of L-threonine, HCO(3)(-)/CO(2) and ATP to give threonylcarbamoyl-AMP (TC-AMP) as the acyladenylate intermediate, with the release of diphosphate. The sequence is that of Threonylcarbamoyl-AMP synthase from Xanthomonas axonopodis pv. citri (strain 306).